Reading from the N-terminus, the 461-residue chain is uncharacterized protein (461 aa).

The next 2 membrane-spanning stretches (helical) occupy residues 18 to 38 and 124 to 144; these read IITWLLVILPFPILGTLFLIY and FIFLEYFIIAEGLMWGEILSI. 2 consecutive PLD phosphodiesterase domains span residues 197–224 and 374–401; these read YNYRDHRKILVIDNKVAFNGGINLADEY and TPGFVHAKVFIADDIKAVVGTINLDYRS.

Belongs to the phospholipase D family. Cardiolipin synthase subfamily.

The protein resides in the cell membrane. This is an uncharacterized protein from Streptococcus mutans serotype c (strain ATCC 700610 / UA159).